The sequence spans 444 residues: Tubulin beta-7 chain (444 aa).

GTP contacts are provided by Q11, E69, S138, G142, T143, G144, N204, and N226. E69 provides a ligand contact to Mg(2+).

The protein belongs to the tubulin family. Dimer of alpha and beta chains. A typical microtubule is a hollow water-filled tube with an outer diameter of 25 nm and an inner diameter of 15 nM. Alpha-beta heterodimers associate head-to-tail to form protofilaments running lengthwise along the microtubule wall with the beta-tubulin subunit facing the microtubule plus end conferring a structural polarity. Microtubules usually have 13 protofilaments but different protofilament numbers can be found in some organisms and specialized cells. Mg(2+) serves as cofactor.

It is found in the cytoplasm. The protein resides in the cytoskeleton. In terms of biological role, tubulin is the major constituent of microtubules, a cylinder consisting of laterally associated linear protofilaments composed of alpha- and beta-tubulin heterodimers. Microtubules grow by the addition of GTP-tubulin dimers to the microtubule end, where a stabilizing cap forms. Below the cap, tubulin dimers are in GDP-bound state, owing to GTPase activity of alpha-tubulin. The chain is Tubulin beta-7 chain from Gossypium hirsutum (Upland cotton).